Here is a 204-residue protein sequence, read N- to C-terminus: LexA repressor (204 aa).

Residues 28–48 (RAEIAQELGFKSPNAAEEHLK) constitute a DNA-binding region (H-T-H motif). Residues S125 and K162 each act as for autocatalytic cleavage activity in the active site.

It belongs to the peptidase S24 family. Homodimer.

The enzyme catalyses Hydrolysis of Ala-|-Gly bond in repressor LexA.. Its function is as follows. Represses a number of genes involved in the response to DNA damage (SOS response), including recA and lexA. In the presence of single-stranded DNA, RecA interacts with LexA causing an autocatalytic cleavage which disrupts the DNA-binding part of LexA, leading to derepression of the SOS regulon and eventually DNA repair. This Ectopseudomonas mendocina (strain ymp) (Pseudomonas mendocina) protein is LexA repressor.